The chain runs to 804 residues: Leucine--tRNA ligase (804 aa).

Residues 39–50 (PYPSGKGLHVGH) carry the 'HIGH' region motif. The 'KMSKS' region motif lies at 573–577 (KMSKS). Lysine 576 contributes to the ATP binding site.

Belongs to the class-I aminoacyl-tRNA synthetase family.

The protein localises to the cytoplasm. It carries out the reaction tRNA(Leu) + L-leucine + ATP = L-leucyl-tRNA(Leu) + AMP + diphosphate. This chain is Leucine--tRNA ligase, found in Lactobacillus delbrueckii subsp. bulgaricus (strain ATCC BAA-365 / Lb-18).